Reading from the N-terminus, the 248-residue chain is Tetraspanin-18 (248 aa).

Residues 1-13 (MEGDCLSCMKYLM) are Cytoplasmic-facing. A helical transmembrane segment spans residues 14 to 34 (FVFNFFIFLGGACLLAIGIWV). At 35–49 (MVDPTGFREIVAANP) the chain is on the extracellular side. A helical transmembrane segment spans residues 50 to 70 (LLLTGAYILLAMGGLLFLLGF). The Cytoplasmic portion of the chain corresponds to 71 to 83 (LGCCGAVRENKCL). A helical transmembrane segment spans residues 84 to 104 (LLFFFLFILIIFLAELSAAIL). At 105-223 (AFIFRENLTR…TFETYVYLAG (119 aa)) the chain is on the extracellular side. 2 N-linked (GlcNAc...) asparagine glycosylation sites follow: Asn-111 and Asn-129. The helical transmembrane segment at 224–244 (ALAIGVLAIELFAMIFAMCLF) threads the bilayer. The Cytoplasmic segment spans residues 245-248 (RGIQ).

The protein belongs to the tetraspanin (TM4SF) family. Interacts with ORAI1; this interaction regulates ORAI1 exit from the endoplasmic (ER), and/or Golgi, and trafficking to the cell surface. As to expression, highly expressed in primary endothelial cells. Expressed in the embryo heart. Weakly expressed the embryo skeletal muscle.

Its subcellular location is the membrane. Functionally, plays a role in the cell surface localization of ORAI1 and may participate in the regulation of Ca(2+) signaling and the VWF release in response to inflammatory stimuli. The polypeptide is Tetraspanin-18 (Homo sapiens (Human)).